Consider the following 711-residue polypeptide: DNA topoisomerase 1 (711 aa).

In terms of domain architecture, Toprim spans 3–134; sequence KNLVVIESPN…KCQRITFNEI (132 aa). Residues Glu-9 and Asp-102 each contribute to the Mg(2+) site. In terms of domain architecture, Topo IA-type catalytic spans 150–604; sequence DQSWVQSQFA…FWSNFKEEVK (455 aa). Residues 183–188 are interaction with DNA; that stretch reads SAGRVQ. Catalysis depends on Tyr-340, which acts as the O-(5'-phospho-DNA)-tyrosine intermediate. C4-type zinc fingers lie at residues 624 to 652 and 673 to 702; these read CPSC…FPNC and CPEC…FPRC.

This sequence belongs to the type IA topoisomerase family. Monomer. Requires Mg(2+) as cofactor.

The enzyme catalyses ATP-independent breakage of single-stranded DNA, followed by passage and rejoining.. Its function is as follows. Releases the supercoiling and torsional tension of DNA, which is introduced during the DNA replication and transcription, by transiently cleaving and rejoining one strand of the DNA duplex. Introduces a single-strand break via transesterification at a target site in duplex DNA. The scissile phosphodiester is attacked by the catalytic tyrosine of the enzyme, resulting in the formation of a DNA-(5'-phosphotyrosyl)-enzyme intermediate and the expulsion of a 3'-OH DNA strand. The free DNA strand then undergoes passage around the unbroken strand, thus removing DNA supercoils. Finally, in the religation step, the DNA 3'-OH attacks the covalent intermediate to expel the active-site tyrosine and restore the DNA phosphodiester backbone. This is DNA topoisomerase 1 from Mycoplasma pneumoniae (strain ATCC 29342 / M129 / Subtype 1) (Mycoplasmoides pneumoniae).